Here is a 339-residue protein sequence, read N- to C-terminus: Phenylalanine--tRNA ligase alpha subunit (339 aa).

Glu-247 provides a ligand contact to Mg(2+).

This sequence belongs to the class-II aminoacyl-tRNA synthetase family. Phe-tRNA synthetase alpha subunit type 1 subfamily. In terms of assembly, tetramer of two alpha and two beta subunits. It depends on Mg(2+) as a cofactor.

The protein localises to the cytoplasm. It catalyses the reaction tRNA(Phe) + L-phenylalanine + ATP = L-phenylalanyl-tRNA(Phe) + AMP + diphosphate + H(+). In Deinococcus geothermalis (strain DSM 11300 / CIP 105573 / AG-3a), this protein is Phenylalanine--tRNA ligase alpha subunit.